Here is a 376-residue protein sequence, read N- to C-terminus: Chaperone protein DnaJ (376 aa).

Residues 5–70 (DYYEVLGVAR…NKRRAYDAHG (66 aa)) form the J domain. Residues 132-209 (GIERRIEIPT…CHGAGRVEED (78 aa)) form a CR-type zinc finger. 8 residues coordinate Zn(2+): C145, C148, C161, C164, C183, C186, C197, and C200. CXXCXGXG motif repeat units follow at residues 145–152 (CEPCHGSG), 161–168 (CATCHGRG), 183–190 (CPHCDGRG), and 197–204 (CKTCHGAG).

This sequence belongs to the DnaJ family. As to quaternary structure, homodimer. Requires Zn(2+) as cofactor.

It is found in the cytoplasm. Its function is as follows. Participates actively in the response to hyperosmotic and heat shock by preventing the aggregation of stress-denatured proteins and by disaggregating proteins, also in an autonomous, DnaK-independent fashion. Unfolded proteins bind initially to DnaJ; upon interaction with the DnaJ-bound protein, DnaK hydrolyzes its bound ATP, resulting in the formation of a stable complex. GrpE releases ADP from DnaK; ATP binding to DnaK triggers the release of the substrate protein, thus completing the reaction cycle. Several rounds of ATP-dependent interactions between DnaJ, DnaK and GrpE are required for fully efficient folding. Also involved, together with DnaK and GrpE, in the DNA replication of plasmids through activation of initiation proteins. This Xanthomonas campestris pv. campestris (strain 8004) protein is Chaperone protein DnaJ.